The chain runs to 140 residues: Ribosomal RNA large subunit methyltransferase H (140 aa).

S-adenosyl-L-methionine is bound by residues Leu-58, Gly-90, and 108–113 (LSLLTF).

Belongs to the RNA methyltransferase RlmH family. As to quaternary structure, homodimer.

It localises to the cytoplasm. It catalyses the reaction pseudouridine(1915) in 23S rRNA + S-adenosyl-L-methionine = N(3)-methylpseudouridine(1915) in 23S rRNA + S-adenosyl-L-homocysteine + H(+). Specifically methylates the pseudouridine at position 1915 (m3Psi1915) in 23S rRNA. This is Ribosomal RNA large subunit methyltransferase H from Protochlamydia amoebophila (strain UWE25).